A 294-amino-acid chain; its full sequence is Probable endonuclease 4 (294 aa).

Residues histidine 78, histidine 118, glutamate 157, aspartate 191, histidine 194, histidine 228, aspartate 241, histidine 243, and glutamate 273 each contribute to the Zn(2+) site.

Belongs to the AP endonuclease 2 family. The cofactor is Zn(2+).

The enzyme catalyses Endonucleolytic cleavage to 5'-phosphooligonucleotide end-products.. In terms of biological role, endonuclease IV plays a role in DNA repair. It cleaves phosphodiester bonds at apurinic or apyrimidinic (AP) sites, generating a 3'-hydroxyl group and a 5'-terminal sugar phosphate. This chain is Probable endonuclease 4, found in Streptomyces coelicolor (strain ATCC BAA-471 / A3(2) / M145).